The sequence spans 99 residues: Ribosomal processing cysteine protease Prp (99 aa).

Residue H16 is the Proton donor of the active site. C28 acts as the Nucleophile in catalysis.

The protein belongs to the Prp family. In terms of assembly, homodimer.

Functionally, an essential cysteine protease that cleaves the N-terminus from ribosomal protein bL27. In Mycoplasma genitalium (strain ATCC 33530 / DSM 19775 / NCTC 10195 / G37) (Mycoplasmoides genitalium), this protein is Ribosomal processing cysteine protease Prp.